We begin with the raw amino-acid sequence, 254 residues long: Probable phosphatase Sbal223_2880 (254 aa).

Zn(2+)-binding residues include His-8, His-10, His-16, His-41, Glu-74, His-102, His-132, Asp-193, and His-195.

Belongs to the PHP family. Requires Zn(2+) as cofactor.

The sequence is that of Probable phosphatase Sbal223_2880 from Shewanella baltica (strain OS223).